A 715-amino-acid polypeptide reads, in one-letter code: ATP-dependent DNA helicase Hel308 (715 aa).

A Q motif motif is present at residues 1–29; sequence MKVGELNVSEKIKEILRERGIEELYPPQA. ATP contacts are provided by residues glutamine 28 and 46 to 53; that span reads IPTASGKT. In terms of domain architecture, Helicase ATP-binding spans 33–197; it reads TSGVLEGENL…WLNAKLIRSD (165 aa). A DEAH box motif is present at residues 145-148; it reads DEIH. Residues 226–422 enclose the Helicase C-terminal domain; it reads WEELVYDAVK…ILRSQILALI (197 aa).

It belongs to the helicase family. Hel308 subfamily. Monomer.

It carries out the reaction Couples ATP hydrolysis with the unwinding of duplex DNA by translocating in the 3'-5' direction.. The catalysed reaction is ATP + H2O = ADP + phosphate + H(+). In terms of biological role, DNA-dependent ATPase and 3'-5' DNA helicase that may be involved in repair of stalled replication forks. Rapidly unwinds double-stranded (ds)DNA with a 3'-overhang, has no strand reannealing capabilities. Binds single-stranded (ss)DNA, dsDNA with a 3'-overhang and ssRNA. This is ATP-dependent DNA helicase Hel308 from Pyrococcus abyssi (strain GE5 / Orsay).